Here is an 81-residue protein sequence, read N- to C-terminus: Costars family protein ABRACL (81 aa).

The protein belongs to the costars family.

The chain is Costars family protein ABRACL from Salmo salar (Atlantic salmon).